Consider the following 37-residue polypeptide: MKVKPSVKTVCEKCKVIRRKGKVVIICSNAKHKQRQG.

The protein belongs to the bacterial ribosomal protein bL36 family.

This Desulforudis audaxviator (strain MP104C) protein is Large ribosomal subunit protein bL36.